The chain runs to 165 residues: Large ribosomal subunit protein uL10 (165 aa).

It belongs to the universal ribosomal protein uL10 family. In terms of assembly, part of the ribosomal stalk of the 50S ribosomal subunit. The N-terminus interacts with L11 and the large rRNA to form the base of the stalk. The C-terminus forms an elongated spine to which L12 dimers bind in a sequential fashion forming a multimeric L10(L12)X complex.

Functionally, forms part of the ribosomal stalk, playing a central role in the interaction of the ribosome with GTP-bound translation factors. This chain is Large ribosomal subunit protein uL10, found in Hamiltonella defensa subsp. Acyrthosiphon pisum (strain 5AT).